A 197-amino-acid polypeptide reads, in one-letter code: MSHFFAHLSRLKLINRWPLMRNVRTENVSEHSLQVAFVAHALAIIKNRKFNGNLNAERIALLAMYHDASEVITGDLPTPIKYHNPKIAHEYKKIEKVAQQKLIEMLPKELQHDFRCLLDEHYYSEEEKALVKQADALCAYLKCLEELSAGNNEFIQAKARLENTLAIRQSPEMDYFMAVFVPSFSLSLDEISLDSLD.

Substrate contacts are provided by residues 16–17 and His-31; that span reads RW. Residues 28-140 enclose the HD domain; that stretch reads VSEHSLQVAF…VKQADALCAY (113 aa). A divalent metal cation contacts are provided by His-31, His-66, and Asp-67. Substrate contacts are provided by residues Asp-67, 75-78, and Asp-135; that span reads DLPT. Asp-135 is a binding site for a divalent metal cation.

Belongs to the 5DNU family. In terms of assembly, homodimer. Requires a divalent metal cation as cofactor.

Its subcellular location is the cytoplasm. The enzyme catalyses a 2'-deoxyribonucleoside 5'-phosphate + H2O = a 2'-deoxyribonucleoside + phosphate. Functionally, catalyzes the strictly specific dephosphorylation of 2'-deoxyribonucleoside 5'-monophosphates. The sequence is that of 5'-deoxynucleotidase YPTB2590 from Yersinia pseudotuberculosis serotype I (strain IP32953).